Here is a 118-residue protein sequence, read N- to C-terminus: Large ribosomal subunit protein bL20 (118 aa).

Belongs to the bacterial ribosomal protein bL20 family.

In terms of biological role, binds directly to 23S ribosomal RNA and is necessary for the in vitro assembly process of the 50S ribosomal subunit. It is not involved in the protein synthesizing functions of that subunit. The protein is Large ribosomal subunit protein bL20 of Lactobacillus delbrueckii subsp. bulgaricus (strain ATCC BAA-365 / Lb-18).